We begin with the raw amino-acid sequence, 308 residues long: Cell division protein FtsQ (308 aa).

Residues 1–28 (MQSLSFPPNRRTPRLAPPRRETGRRDPA) are disordered. The Cytoplasmic portion of the chain corresponds to 1–46 (MQSLSFPPNRRTPRLAPPRRETGRRDPAPSRWAYRAQRLWLTPMFR). Residues 18-28 (PRRETGRRDPA) show a composition bias toward basic and acidic residues. The helical transmembrane segment at 47–67 (TALRVGLPIVGVLLVVALIFA) threads the bilayer. At 68 to 308 (SADRRAAMAG…RGIDTSGSDL (241 aa)) the chain is on the periplasmic side. The POTRA domain maps to 92 to 160 (FMVTLLSVDG…GLLEVRVTER (69 aa)).

The protein belongs to the FtsQ/DivIB family. FtsQ subfamily.

It is found in the cell inner membrane. In terms of biological role, essential cell division protein. This Cereibacter sphaeroides (strain ATCC 17023 / DSM 158 / JCM 6121 / CCUG 31486 / LMG 2827 / NBRC 12203 / NCIMB 8253 / ATH 2.4.1.) (Rhodobacter sphaeroides) protein is Cell division protein FtsQ.